The sequence spans 317 residues: 1-phosphatidylinositol phosphodiesterase (317 aa).

The N-terminal stretch at 1 to 22 is a signal peptide; sequence MYKNYLQRTLVLLLCFILYFFT. A PI-PLC X-box domain is found at 58–196; the sequence is LAALSIPGTH…LKDVRGKILL (139 aa). Residue His-67 is the Proton acceptor of the active site. Residue His-115 is the Proton donor of the active site.

In terms of assembly, monomer.

It is found in the secreted. It localises to the cytoplasm. It catalyses the reaction a 1,2-diacyl-sn-glycero-3-phospho-(1D-myo-inositol) = 1D-myo-inositol 1,2-cyclic phosphate + a 1,2-diacyl-sn-glycerol. In terms of biological role, cleaves glycosylphosphatidylinositol (GPI) and phosphatidylinositol (PI) anchors but not PI phosphates. Important factor in pathogenesis, PI-PLC activity is present only in virulent listeria species. It may participate in the lysis of the phagolysosomal membrane. This is 1-phosphatidylinositol phosphodiesterase (plcA) from Listeria monocytogenes serovar 1/2a (strain ATCC BAA-679 / EGD-e).